Reading from the N-terminus, the 634-residue chain is uncharacterized protein (634 aa).

This is an uncharacterized protein from Homo sapiens (Human).